Reading from the N-terminus, the 260-residue chain is Protein phosphatase 1 regulatory subunit 35 (260 aa).

Residues 1–100 form a disordered region; it reads MMGFGASALE…PLLVAGAPGD (100 aa). A phosphoserine mark is found at Ser-46 and Ser-53. Positions 64–76 are enriched in basic residues; it reads RKGRRGGSRRGRQ.

The protein belongs to the PPP1R35 family. Interacts with PPP1CA; this interaction mediates the PPP1CA phosphatase activity inhibition. Interacts with RTTN; this interaction allows the mutual recruitment to the centriole.

The protein resides in the cytoplasm. Its subcellular location is the cytoskeleton. It is found in the microtubule organizing center. It localises to the centrosome. The protein localises to the centriole. During centriole duplication, plays a role in the centriole elongation by promoting the recruitment of the microtubule-binding elongation machinery through its interaction with TTTN, leading to the centriole to centrosome conversion. In addition may play a role in the primary cilia assembly. In Mus musculus (Mouse), this protein is Protein phosphatase 1 regulatory subunit 35.